The primary structure comprises 888 residues: Patched domain-containing protein 1 (888 aa).

Residues 20 to 40 (FIASHPVFFASAPVLISILLG) traverse the membrane as a helical segment. N-linked (GlcNAc...) asparagine glycans are attached at residues N77, N133, and N167. Residues 268-427 (SERYLVTSLI…LSFYGSSLVF (160 aa)) enclose the SSD domain. Helical transmembrane passes span 273–293 (VTSLILVVTMAILCCSMQDCV) and 298–318 (WLGLLGLVTISLATLTAAGII). N319 and N326 each carry an N-linked (GlcNAc...) asparagine glycan. 4 consecutive transmembrane segments (helical) span residues 328-348 (TFLGVPFVMLGHGLYGTFEML), 373-393 (LSFSLTTAMYLVTFGIGASPF), 407-427 (CIAILFNYLYVLSFYGSSLVF), and 502-522 (PFVVLFYLIYISFALMGYLQV). N-linked (GlcNAc...) asparagine glycosylation is found at N568, N599, and N608. Transmembrane regions (helical) follow at residues 707–727 (ALFLLFFSAFLVADSLINVWI) and 738–758 (VIGFMTLWKVELDCISVLCLI). N-linked (GlcNAc...) asparagine glycosylation is present at N762. Residues 795-815 (GVAILQSYLCYIVGLFPLAAV) traverse the membrane as a helical segment. An N-linked (GlcNAc...) asparagine glycan is attached at N818. The chain crosses the membrane as a helical span at residues 826 to 846 (CLFLIAFVTFFHCFAILPVIL).

Belongs to the patched family. As to expression, broadly expressed in the brain. Selectively expressed in the thalamic reticular nucleus (TRN) in early development and continues to be enriched in this structure throughout adult life.

Its subcellular location is the cell membrane. It localises to the cell projection. It is found in the dendritic spine. In terms of biological role, required for the development and function of the thalamic reticular nucleus (TRN), a part of the thalamus that is critical for thalamocortical transmission, generation of sleep rhythms, sensorimotor processing and attention. Can bind cholesterol in vitro. In Mus musculus (Mouse), this protein is Patched domain-containing protein 1.